Here is a 241-residue protein sequence, read N- to C-terminus: Probable transcriptional regulatory protein Rpic_2388 (241 aa).

Belongs to the TACO1 family.

The protein resides in the cytoplasm. This Ralstonia pickettii (strain 12J) protein is Probable transcriptional regulatory protein Rpic_2388.